The sequence spans 486 residues: Probable transporter MCH1 (486 aa).

A run of 6 helical transmembrane segments spans residues 31–51 (ISFF…LFSL), 69–89 (FIAS…GYLA), 91–111 (CYGP…SYFV), 132–152 (FGIC…SSLL), 164–184 (LAIS…SQLM), and 204–224 (FFGV…SVVS). The interval 236 to 260 (EMEEADEESPLMTSRSRHSHHSCED) is disordered. A helical membrane pass occupies residues 280 to 300 (FINFLKDKSAWLLLASLILNI). N-linked (GlcNAc...) asparagine glycosylation occurs at Asn322. 2 consecutive transmembrane segments (helical) span residues 327–348 (VSIM…SDYL) and 357–377 (ICRV…QFMV). An N-linked (GlcNAc...) asparagine glycan is attached at Asn390. A run of 2 helical transmembrane segments spans residues 395–415 (GGLF…DMMG) and 417–437 (TWGS…IFYG). The N-linked (GlcNAc...) asparagine glycan is linked to Asn457. A helical membrane pass occupies residues 458 to 478 (LTAVGLSVSLILIIIVWKGIW).

Belongs to the major facilitator superfamily.

Its subcellular location is the vacuole membrane. Functionally, probable transporter. This is Probable transporter MCH1 (MCH1) from Debaryomyces hansenii (strain ATCC 36239 / CBS 767 / BCRC 21394 / JCM 1990 / NBRC 0083 / IGC 2968) (Yeast).